The chain runs to 419 residues: Circumsporozoite protein (419 aa).

The N-terminal stretch at 1–23 (MKNFNLLAVSSILLVDLFRTHWG) is a signal peptide. A disordered region spans residues 50–111 (AQVRQSASRG…GNAGGNAGGN (62 aa)). Over residues 65–95 (NPKEEDGADKKKKKDEKQVEPKKPRENKLKQ) the composition is skewed to basic and acidic residues. The interval 81–89 (KQVEPKKPR) is required for the binding to heparan sulfate proteoglycans (HSPGs) on the surface of host hepatocytes. The segment at 92–96 (KLKQP) is region I; contains the proteolytic cleavage site. 38 repeat units span residues 99 to 102 (NADG), 103 to 106 (NAGG), 107 to 110 (NAGG), 111 to 114 (NAGG), 115 to 118 (NAGG), 119 to 122 (NAGG), 123 to 126 (NADG), 127 to 130 (NAGG), 131 to 134 (NAGG), 135 to 138 (NAGG), 139 to 142 (NAGG), 143 to 146 (NAGG), 147 to 150 (NADG), 151 to 154 (NAGG), 155 to 158 (NADG), 159 to 162 (NAGG), 163 to 166 (NADG), 167 to 170 (NAGG), 171 to 174 (NAGG), 175 to 178 (NAGG), 179 to 182 (NADG), 183 to 186 (NAGG), 187 to 190 (NAGG), 191 to 194 (NAGG), 195 to 198 (NAGG), 199 to 202 (NAGG), 203 to 206 (NAGG), 207 to 210 (NAGG), 211 to 214 (NADG), 215 to 218 (NAGG), 219 to 222 (NAGG), 223 to 226 (NAGG), 227 to 230 (NADG), 231 to 234 (NAGG), 235 to 238 (NAGG), 239 to 242 (NAGG), 243 to 246 (NAGG), and 247 to 250 (NAGG). Positions 99 to 314 (NADGNAGGNA…GGNAGANAGN (216 aa)) are 54 X 4 AA approximate tandem repeats of N-A-G-G. The disordered stretch occupies residues 146 to 237 (GNADGNAGGN…ADGNAGGNAG (92 aa)). The 39; approximate repeat unit spans residues 251 to 254 (TAGG). A run of 13 repeats spans residues 255-258 (NADG), 259-262 (NAGG), 263-266 (NAGG), 267-270 (NAGG), 271-274 (NAGG), 275-278 (NAGG), 279-282 (NAGG), 283-286 (NAGG), 287-290 (NAGG), 291-294 (NAGG), 295-298 (NAGG), 299-302 (NAGG), and 303-306 (NAGG). The stretch at 307–310 (NAGA) is one 53; approximate repeat. The stretch at 311-314 (NAGN) is one 54; approximate repeat. The interval 312–332 (AGNKKAGDAGAGQGQNNEAAN) is disordered. Residues 345–397 (KIRSTISTEWSPCSVTCGKGVRMRKKVSAANKKPEELDVNDLETEVCTMDKCA) enclose the TSP type-1 domain. Disulfide bonds link C357/C391 and C361/C396. O-linked (Fuc) threonine glycosylation is present at T360. A lipid anchor (GPI-anchor amidated cysteine) is attached at C396. The propeptide at 397-419 (AGIFNVVSNSLRLVILLVLALFN) is removed in mature form.

It belongs to the plasmodium circumsporozoite protein family. In terms of processing, during host cell invasion, proteolytically cleaved at the cell membrane in the region I by a papain-like cysteine protease of parasite origin. Cleavage is triggered by the sporozoite contact with highly sulfated heparan sulfate proteoglycans (HSPGs) present on the host hepatocyte cell surface. Cleavage exposes the TSP type-1 (TSR) domain and is required for productive invasion of host hepatocytes but not for adhesion to the host cell membrane. Cleavage is dispensable for sporozoite development in the oocyst, motility and for traversal of host and vector cells. Post-translationally, O-glycosylated; maybe by POFUT2.

The protein localises to the cell membrane. The protein resides in the cytoplasm. In terms of biological role, essential sporozoite protein. In the mosquito vector, required for sporozoite development in the oocyst, migration through the vector hemolymph and entry into the vector salivary glands. In the vertebrate host, required for sporozoite migration through the host dermis and infection of host hepatocytes. Binds to highly sulfated heparan sulfate proteoglycans (HSPGs) on the surface of host hepatocytes. In the vertebrate host, binds to highly sulfated heparan sulfate proteoglycans (HSPGs) on the surface of host hepatocytes and is required for sporozoite invasion of the host hepatocytes. The sequence is that of Circumsporozoite protein from Plasmodium cynomolgi (strain Mulligan/NIH).